The following is a 494-amino-acid chain: Catalase A (494 aa).

The span at 1–23 shows a compositional bias: polar residues; the sequence is MTDRPTITTTAGAPVPDNQNSLT. A disordered region spans residues 1–25; it reads MTDRPTITTTAGAPVPDNQNSLTAG. Catalysis depends on residues His-55 and Asn-127. Tyr-337 lines the heme pocket.

Belongs to the catalase family. It depends on heme as a cofactor.

It is found in the periplasm. It carries out the reaction 2 H2O2 = O2 + 2 H2O. Its function is as follows. Decomposes hydrogen peroxide into water and oxygen; serves to protect cells from the toxic effects of hydrogen peroxide. This is Catalase A (katA) from Rhizobium meliloti (strain 1021) (Ensifer meliloti).